We begin with the raw amino-acid sequence, 201 residues long: MDKFTTLEGVAAPLKIINVDTDMIIPKQYLKTIKRTGLGKGLFSEQRYRDDGSENPDFILNKPAYRNAKVLVAGDNFGCGSSREHAPWALLDFGIRCVISTSFGDIFYNNCFKNGILPIRVTQADLDKLFDDAERGANATLTIDLANQEIRGPDGGKATFEIDPFRKHCLLNGLDDIGLTMEKKSAIDSYEDKARRERAWA.

This sequence belongs to the LeuD family. LeuD type 1 subfamily. Heterodimer of LeuC and LeuD.

It carries out the reaction (2R,3S)-3-isopropylmalate = (2S)-2-isopropylmalate. It participates in amino-acid biosynthesis; L-leucine biosynthesis; L-leucine from 3-methyl-2-oxobutanoate: step 2/4. Functionally, catalyzes the isomerization between 2-isopropylmalate and 3-isopropylmalate, via the formation of 2-isopropylmaleate. The chain is 3-isopropylmalate dehydratase small subunit from Nitrobacter hamburgensis (strain DSM 10229 / NCIMB 13809 / X14).